The primary structure comprises 261 residues: 5'-nucleotidase SurE (261 aa).

The a divalent metal cation site is built by Asp-8, Asp-9, Ser-43, and Asn-96.

The protein belongs to the SurE nucleotidase family. The cofactor is a divalent metal cation.

The protein localises to the cytoplasm. It catalyses the reaction a ribonucleoside 5'-phosphate + H2O = a ribonucleoside + phosphate. In terms of biological role, nucleotidase that shows phosphatase activity on nucleoside 5'-monophosphates. This chain is 5'-nucleotidase SurE, found in Cereibacter sphaeroides (strain ATCC 17029 / ATH 2.4.9) (Rhodobacter sphaeroides).